We begin with the raw amino-acid sequence, 149 residues long: Large ribosomal subunit protein bL9 (149 aa).

This sequence belongs to the bacterial ribosomal protein bL9 family.

Binds to the 23S rRNA. The polypeptide is Large ribosomal subunit protein bL9 (Amoebophilus asiaticus (strain 5a2)).